Consider the following 363-residue polypeptide: Putative RAD2-like endonuclease 095R (363 aa).

The protein belongs to the XPG/RAD2 endonuclease family. It depends on Mg(2+) as a cofactor.

The protein localises to the host nucleus. In terms of biological role, probable endonuclease. In Frog virus 3 (isolate Goorha) (FV-3), this protein is Putative RAD2-like endonuclease 095R.